The sequence spans 137 residues: NADH-quinone oxidoreductase subunit A (137 aa).

The next 3 helical transmembrane spans lie at 12-32 (WGFA…LGLS), 66-86 (FYLV…LFAW), and 95-115 (WTGF…LVYL).

Belongs to the complex I subunit 3 family. In terms of assembly, NDH-1 is composed of 13 different subunits. Subunits NuoA, H, J, K, L, M, N constitute the membrane sector of the complex.

The protein localises to the cell inner membrane. The enzyme catalyses a quinone + NADH + 5 H(+)(in) = a quinol + NAD(+) + 4 H(+)(out). In terms of biological role, NDH-1 shuttles electrons from NADH, via FMN and iron-sulfur (Fe-S) centers, to quinones in the respiratory chain. The immediate electron acceptor for the enzyme in this species is believed to be ubiquinone. Couples the redox reaction to proton translocation (for every two electrons transferred, four hydrogen ions are translocated across the cytoplasmic membrane), and thus conserves the redox energy in a proton gradient. The chain is NADH-quinone oxidoreductase subunit A from Pseudomonas savastanoi pv. phaseolicola (strain 1448A / Race 6) (Pseudomonas syringae pv. phaseolicola (strain 1448A / Race 6)).